The chain runs to 377 residues: Succinyl-diaminopimelate desuccinylase (377 aa).

His-67 serves as a coordination point for Zn(2+). The active site involves Asp-69. Asp-100 is a Zn(2+) binding site. Glu-134 (proton acceptor) is an active-site residue. Positions 135, 163, and 349 each coordinate Zn(2+).

This sequence belongs to the peptidase M20A family. DapE subfamily. As to quaternary structure, homodimer. Zn(2+) is required as a cofactor. It depends on Co(2+) as a cofactor.

It catalyses the reaction N-succinyl-(2S,6S)-2,6-diaminopimelate + H2O = (2S,6S)-2,6-diaminopimelate + succinate. It functions in the pathway amino-acid biosynthesis; L-lysine biosynthesis via DAP pathway; LL-2,6-diaminopimelate from (S)-tetrahydrodipicolinate (succinylase route): step 3/3. Functionally, catalyzes the hydrolysis of N-succinyl-L,L-diaminopimelic acid (SDAP), forming succinate and LL-2,6-diaminopimelate (DAP), an intermediate involved in the bacterial biosynthesis of lysine and meso-diaminopimelic acid, an essential component of bacterial cell walls. The chain is Succinyl-diaminopimelate desuccinylase from Actinobacillus pleuropneumoniae serotype 5b (strain L20).